The chain runs to 262 residues: Triosephosphate isomerase (262 aa).

Residue 13 to 15 coordinates substrate; sequence NWK. His103 serves as the catalytic Electrophile. Residue Glu175 is the Proton acceptor of the active site. Substrate-binding positions include Gly181, Ser221, and 242-243; that span reads GG.

It belongs to the triosephosphate isomerase family. As to quaternary structure, homodimer.

It is found in the cytoplasm. The enzyme catalyses D-glyceraldehyde 3-phosphate = dihydroxyacetone phosphate. Its pathway is carbohydrate biosynthesis; gluconeogenesis. It functions in the pathway carbohydrate degradation; glycolysis; D-glyceraldehyde 3-phosphate from glycerone phosphate: step 1/1. Functionally, involved in the gluconeogenesis. Catalyzes stereospecifically the conversion of dihydroxyacetone phosphate (DHAP) to D-glyceraldehyde-3-phosphate (G3P). This chain is Triosephosphate isomerase, found in Corynebacterium efficiens (strain DSM 44549 / YS-314 / AJ 12310 / JCM 11189 / NBRC 100395).